The primary structure comprises 24 residues: Brevinin-1SPa (24 aa).

Cys18 and Cys24 are oxidised to a cystine.

As to expression, expressed by the skin glands.

The protein resides in the secreted. Functionally, antimicrobial peptide with activity against Gram-negative and Gram-positive bacteria (MIC=13 uM against E.coli, MIC=3 uM against S.aureus) and fungi (MIC=6 uM against C.albicans). Shows hemolytic activity on human erythrocytes (HC(50)=7 uM). This is Brevinin-1SPa from Lithobates septentrionalis (Mink frog).